The primary structure comprises 350 residues: MSKFWSPFVKNLVPYVPGEQPKLTKLVKLNTNENPYGPSPRALAAMQAELNDNLRLYPDPNSDLLKQAVASYYGVQGNQVFLGNGSDEVLAHIFHGLLQQEKPLLFPDISYSFYPVYCGLYGIEHEAVPLDEQFQIRVADYARPNGGIIFPNPNAPTGCLLALDAVEQILKASPDSVVVVDEAYIDFGGQTAISLVDRYPNLLVTQTLSKSRSLAGLRVGLAVGHPDLIEALERVKNSFNSYPLDRLAIVGAAAAFEDREYFAKTCQQVIDSREWVVAQLQAKGFEVLPSAANFIFARHPRHDAAGLAAKLREQGVIVRHFKQQRIAQFLRISIGTQEQNQALIDGLGEL.

N6-(pyridoxal phosphate)lysine is present on Lys210.

It belongs to the class-II pyridoxal-phosphate-dependent aminotransferase family. Histidinol-phosphate aminotransferase subfamily. In terms of assembly, homodimer. It depends on pyridoxal 5'-phosphate as a cofactor.

The enzyme catalyses L-histidinol phosphate + 2-oxoglutarate = 3-(imidazol-4-yl)-2-oxopropyl phosphate + L-glutamate. The protein operates within amino-acid biosynthesis; L-histidine biosynthesis; L-histidine from 5-phospho-alpha-D-ribose 1-diphosphate: step 7/9. The sequence is that of Histidinol-phosphate aminotransferase 1 from Pseudomonas fluorescens (strain ATCC BAA-477 / NRRL B-23932 / Pf-5).